The following is a 319-amino-acid chain: uncharacterized protein (319 aa).

An MPN domain is found at valine 29–leucine 164. Histidine 111, histidine 113, and aspartate 124 together coordinate Zn(2+). Positions histidine 111–aspartate 124 match the JAMM motif motif.

This sequence belongs to the peptidase M67A family.

This is an uncharacterized protein from Caenorhabditis elegans.